Reading from the N-terminus, the 467-residue chain is Histone acetyltransferase type B catalytic subunit (467 aa).

Positions methionine 1–serine 24 are disordered. Acetyl-CoA is bound by residues isoleucine 249 to valine 251 and glutamine 256 to serine 262. Glutamate 283 acts as the Proton donor/acceptor in catalysis.

This sequence belongs to the HAT1 family.

It localises to the nucleus. Its subcellular location is the cytoplasm. The enzyme catalyses L-lysyl-[protein] + acetyl-CoA = N(6)-acetyl-L-lysyl-[protein] + CoA + H(+). Functionally, acetylates soluble but not nucleosomal H4. Acetylates 'Lys-12' of histone H4. The protein is Histone acetyltransferase type B catalytic subunit (HAG2) of Arabidopsis thaliana (Mouse-ear cress).